The primary structure comprises 137 residues: uncharacterized protein (137 aa).

Belongs to the ycf72 family.

It localises to the plastid. It is found in the chloroplast. This is an uncharacterized protein from Oryza nivara (Indian wild rice).